The primary structure comprises 379 residues: Cobalt-precorrin-5B C(1)-methyltransferase (379 aa).

Belongs to the CbiD family.

The catalysed reaction is Co-precorrin-5B + S-adenosyl-L-methionine = Co-precorrin-6A + S-adenosyl-L-homocysteine. It participates in cofactor biosynthesis; adenosylcobalamin biosynthesis; cob(II)yrinate a,c-diamide from sirohydrochlorin (anaerobic route): step 6/10. In terms of biological role, catalyzes the methylation of C-1 in cobalt-precorrin-5B to form cobalt-precorrin-6A. The sequence is that of Cobalt-precorrin-5B C(1)-methyltransferase from Salmonella paratyphi A (strain ATCC 9150 / SARB42).